Reading from the N-terminus, the 316-residue chain is Ribose-phosphate pyrophosphokinase (316 aa).

ATP contacts are provided by residues 39–41 (DGE) and 98–99 (RQ). Mg(2+) contacts are provided by histidine 133 and aspartate 172. The active site involves lysine 195. Residues arginine 197, aspartate 221, and 225 to 229 (DTGGT) contribute to the D-ribose 5-phosphate site.

Belongs to the ribose-phosphate pyrophosphokinase family. Class I subfamily. Homohexamer. Mg(2+) serves as cofactor.

The protein localises to the cytoplasm. The catalysed reaction is D-ribose 5-phosphate + ATP = 5-phospho-alpha-D-ribose 1-diphosphate + AMP + H(+). It participates in metabolic intermediate biosynthesis; 5-phospho-alpha-D-ribose 1-diphosphate biosynthesis; 5-phospho-alpha-D-ribose 1-diphosphate from D-ribose 5-phosphate (route I): step 1/1. In terms of biological role, involved in the biosynthesis of the central metabolite phospho-alpha-D-ribosyl-1-pyrophosphate (PRPP) via the transfer of pyrophosphoryl group from ATP to 1-hydroxyl of ribose-5-phosphate (Rib-5-P). This chain is Ribose-phosphate pyrophosphokinase, found in Ralstonia nicotianae (strain ATCC BAA-1114 / GMI1000) (Ralstonia solanacearum).